The sequence spans 197 residues: SIGLEC family-like protein 1 (197 aa).

Residues 118–138 traverse the membrane as a helical segment; that stretch reads GAIYAGIVIALLFLCLLPLIV. Residues 160-179 are disordered; that stretch reads VRASQELEMSLKPEEPGKPV. Positions 162 to 176 are enriched in basic and acidic residues; that stretch reads ASQELEMSLKPEEPG.

Its subcellular location is the membrane. The sequence is that of SIGLEC family-like protein 1 (SIGLECL1) from Homo sapiens (Human).